Reading from the N-terminus, the 353-residue chain is T-complex protein 1 subunit eta (353 aa).

Belongs to the TCP-1 chaperonin family. As to quaternary structure, heterooligomeric complex of about 850 to 900 kDa that forms two stacked rings, 12 to 16 nm in diameter.

The protein localises to the cytoplasm. In terms of biological role, molecular chaperone; assists the folding of proteins upon ATP hydrolysis. Known to play a role, in vitro, in the folding of actin and tubulin. The sequence is that of T-complex protein 1 subunit eta from Tetrahymena thermophila.